The chain runs to 285 residues: Probable endonuclease 4 (285 aa).

The Zn(2+) site is built by His-69, His-109, Glu-145, Asp-179, His-182, His-216, Asp-229, His-231, and Glu-261.

This sequence belongs to the AP endonuclease 2 family. The cofactor is Zn(2+).

It carries out the reaction Endonucleolytic cleavage to 5'-phosphooligonucleotide end-products.. Functionally, endonuclease IV plays a role in DNA repair. It cleaves phosphodiester bonds at apurinic or apyrimidinic (AP) sites, generating a 3'-hydroxyl group and a 5'-terminal sugar phosphate. This Escherichia coli O127:H6 (strain E2348/69 / EPEC) protein is Probable endonuclease 4.